The following is a 385-amino-acid chain: S-adenosylmethionine synthase (385 aa).

Histidine 16 contacts ATP. Residue aspartate 18 participates in Mg(2+) binding. Glutamate 44 contacts K(+). L-methionine contacts are provided by glutamate 57 and glutamine 100. A flexible loop region spans residues 100–110 (QSPDINQGVDR). ATP-binding positions include 164–166 (DGK), 230–231 (KF), aspartate 239, 245–246 (RK), alanine 262, and lysine 266. Aspartate 239 contributes to the L-methionine binding site. Lysine 270 lines the L-methionine pocket.

Belongs to the AdoMet synthase family. Homotetramer; dimer of dimers. The cofactor is Mg(2+). Requires K(+) as cofactor.

The protein resides in the cytoplasm. It carries out the reaction L-methionine + ATP + H2O = S-adenosyl-L-methionine + phosphate + diphosphate. It participates in amino-acid biosynthesis; S-adenosyl-L-methionine biosynthesis; S-adenosyl-L-methionine from L-methionine: step 1/1. In terms of biological role, catalyzes the formation of S-adenosylmethionine (AdoMet) from methionine and ATP. The overall synthetic reaction is composed of two sequential steps, AdoMet formation and the subsequent tripolyphosphate hydrolysis which occurs prior to release of AdoMet from the enzyme. The sequence is that of S-adenosylmethionine synthase from Helicobacter pylori (strain J99 / ATCC 700824) (Campylobacter pylori J99).